The chain runs to 163 residues: Superoxide dismutase [Mn] (163 aa).

4 residues coordinate Mn(2+): H2, H50, D134, and H138.

It belongs to the iron/manganese superoxide dismutase family. Requires Mn(2+) as cofactor.

The enzyme catalyses 2 superoxide + 2 H(+) = H2O2 + O2. Destroys superoxide anion radicals which are normally produced within the cells and which are toxic to biological systems. This Mycobacterium scrofulaceum protein is Superoxide dismutase [Mn] (sodA).